A 186-amino-acid polypeptide reads, in one-letter code: TATA-box-binding protein F (186 aa).

Tandem repeats lie at residues 10–86 and 101–179.

Belongs to the TBP family.

Functionally, general factor that plays a role in the activation of archaeal genes transcribed by RNA polymerase. Binds specifically to the TATA box promoter element which lies close to the position of transcription initiation. The sequence is that of TATA-box-binding protein F (tbpF) from Halobacterium salinarum (strain ATCC 700922 / JCM 11081 / NRC-1) (Halobacterium halobium).